A 422-amino-acid chain; its full sequence is Protein FAM53B (422 aa).

A phosphoserine mark is found at S118, S167, S169, S179, S212, and S268. The segment covering 245–268 has biased composition (low complexity); that stretch reads SANSTPASTPELARRSSGLSRSRS. The tract at residues 245-269 is disordered; it reads SANSTPASTPELARRSSGLSRSRSQ. The Nuclear localization signal motif lies at 281–284; that stretch reads KRRR.

This sequence belongs to the FAM53 family. In terms of assembly, interacts with CTNNB1. Detected in skeletal muscle, kidney, spleen, thyroid, testis, ovary, small intestine, colon and peripheral blood.

It localises to the nucleus. Its function is as follows. Acts as a regulator of Wnt signaling pathway by regulating beta-catenin (CTNNB1) nuclear localization. This chain is Protein FAM53B, found in Homo sapiens (Human).